Here is a 97-residue protein sequence, read N- to C-terminus: Putative membrane protein insertion efficiency factor (97 aa).

The protein belongs to the UPF0161 family.

Its subcellular location is the cell membrane. Its function is as follows. Could be involved in insertion of integral membrane proteins into the membrane. The protein is Putative membrane protein insertion efficiency factor of Lactobacillus gasseri (strain ATCC 33323 / DSM 20243 / BCRC 14619 / CIP 102991 / JCM 1131 / KCTC 3163 / NCIMB 11718 / NCTC 13722 / AM63).